We begin with the raw amino-acid sequence, 206 residues long: Uridine kinase (206 aa).

Residue 9–16 (GGSGSGKT) coordinates ATP.

Belongs to the uridine kinase family.

Its subcellular location is the cytoplasm. It carries out the reaction uridine + ATP = UMP + ADP + H(+). The catalysed reaction is cytidine + ATP = CMP + ADP + H(+). The protein operates within pyrimidine metabolism; CTP biosynthesis via salvage pathway; CTP from cytidine: step 1/3. Its pathway is pyrimidine metabolism; UMP biosynthesis via salvage pathway; UMP from uridine: step 1/1. In Borrelia hermsii (strain HS1 / DAH), this protein is Uridine kinase.